Consider the following 419-residue polypeptide: Serine/threonine-protein kinase Kist (419 aa).

The Protein kinase domain maps to tryptophan 23 to phenylalanine 304. ATP is bound by residues leucine 29–valine 37 and lysine 54. Active-site proton acceptor residues include aspartate 141 and aspartate 158. The region spanning arginine 324–leucine 406 is the RRM domain.

This sequence belongs to the protein kinase superfamily. Ser/Thr protein kinase family. In terms of assembly, interacts with stathmin, PAM and CDKN1B/p27Kip1.

The protein resides in the nucleus. The catalysed reaction is L-seryl-[protein] + ATP = O-phospho-L-seryl-[protein] + ADP + H(+). It carries out the reaction L-threonyl-[protein] + ATP = O-phospho-L-threonyl-[protein] + ADP + H(+). Its function is as follows. Upon serum stimulation, phosphorylates CDKN1B/p27Kip1, thus controlling CDKN1B subcellular location and cell cycle progression in G1 phase. May be involved in trafficking and/or processing of RNA. This Pongo abelii (Sumatran orangutan) protein is Serine/threonine-protein kinase Kist (UHMK1).